Reading from the N-terminus, the 54-residue chain is UPF0391 membrane protein Mpe_A2904 (54 aa).

The next 2 membrane-spanning stretches (helical) occupy residues 5 to 25 (AVVF…GIAA) and 30 to 50 (IAKI…LFGL).

This sequence belongs to the UPF0391 family.

The protein resides in the cell membrane. This is UPF0391 membrane protein Mpe_A2904 from Methylibium petroleiphilum (strain ATCC BAA-1232 / LMG 22953 / PM1).